Consider the following 434-residue polypeptide: GTPase Obg (434 aa).

The Obg domain occupies 1-158 (MFIDRAKIYV…RWLYLELKLL (158 aa)). In terms of domain architecture, OBG-type G spans 159–328 (ADVGLLGLPN…LLELMEKYVK (170 aa)). Residues 165-172 (GLPNAGKS), 190-194 (FTTKT), 211-214 (DIPG), 280-283 (NKID), and 309-311 (SAK) contribute to the GTP site. 2 residues coordinate Mg(2+): Ser172 and Thr192. One can recognise an OCT domain in the interval 347-425 (KQENKKQEIP…IGNYVFKYNS (79 aa)).

It belongs to the TRAFAC class OBG-HflX-like GTPase superfamily. OBG GTPase family. In terms of assembly, monomer. It depends on Mg(2+) as a cofactor.

It localises to the cytoplasm. Its function is as follows. An essential GTPase which binds GTP, GDP and possibly (p)ppGpp with moderate affinity, with high nucleotide exchange rates and a fairly low GTP hydrolysis rate. Plays a role in control of the cell cycle, stress response, ribosome biogenesis and in those bacteria that undergo differentiation, in morphogenesis control. This Dictyoglomus turgidum (strain DSM 6724 / Z-1310) protein is GTPase Obg.